The following is a 237-amino-acid chain: Phosphoribosylaminoimidazole-succinocarboxamide synthase (237 aa).

The protein belongs to the SAICAR synthetase family.

It carries out the reaction 5-amino-1-(5-phospho-D-ribosyl)imidazole-4-carboxylate + L-aspartate + ATP = (2S)-2-[5-amino-1-(5-phospho-beta-D-ribosyl)imidazole-4-carboxamido]succinate + ADP + phosphate + 2 H(+). The protein operates within purine metabolism; IMP biosynthesis via de novo pathway; 5-amino-1-(5-phospho-D-ribosyl)imidazole-4-carboxamide from 5-amino-1-(5-phospho-D-ribosyl)imidazole-4-carboxylate: step 1/2. This chain is Phosphoribosylaminoimidazole-succinocarboxamide synthase, found in Salmonella agona (strain SL483).